A 201-amino-acid polypeptide reads, in one-letter code: Acireductone dioxygenase 2 (201 aa).

H83, H85, E89, and H129 together coordinate Fe(2+). Residues H83, H85, E89, and H129 each contribute to the Ni(2+) site.

It belongs to the acireductone dioxygenase (ARD) family. Fe(2+) serves as cofactor. The cofactor is Ni(2+).

Its subcellular location is the cytoplasm. The protein localises to the nucleus. It catalyses the reaction 1,2-dihydroxy-5-(methylsulfanyl)pent-1-en-3-one + O2 = 4-methylsulfanyl-2-oxobutanoate + formate + 2 H(+). It carries out the reaction 1,2-dihydroxy-5-(methylsulfanyl)pent-1-en-3-one + O2 = 3-(methylsulfanyl)propanoate + CO + formate + 2 H(+). Its pathway is amino-acid biosynthesis; L-methionine biosynthesis via salvage pathway; L-methionine from S-methyl-5-thio-alpha-D-ribose 1-phosphate: step 5/6. Catalyzes 2 different reactions between oxygen and the acireductone 1,2-dihydroxy-3-keto-5-methylthiopentene (DHK-MTPene) depending upon the metal bound in the active site. Fe-containing acireductone dioxygenase (Fe-ARD) produces formate and 2-keto-4-methylthiobutyrate (KMTB), the alpha-ketoacid precursor of methionine in the methionine recycle pathway. Ni-containing acireductone dioxygenase (Ni-ARD) produces methylthiopropionate, carbon monoxide and formate, and does not lie on the methionine recycle pathway. This Coprinopsis cinerea (strain Okayama-7 / 130 / ATCC MYA-4618 / FGSC 9003) (Inky cap fungus) protein is Acireductone dioxygenase 2.